Consider the following 692-residue polypeptide: DNA ligase (692 aa).

Over residues 1–14 (MQPDLFSTASQADA) the composition is skewed to polar residues. A disordered region spans residues 1-27 (MQPDLFSTASQADANATPEEPDASNPA). NAD(+) contacts are provided by residues 54-58 (DAEYD), 103-104 (SL), and Glu134. Lys136 (N6-AMP-lysine intermediate) is an active-site residue. Positions 157, 194, 311, and 335 each coordinate NAD(+). Zn(2+) is bound by residues Cys429, Cys432, Cys447, and Cys454. The 81-residue stretch at 612-692 (NKPKPFAGKT…ALLQLLDTHE (81 aa)) folds into the BRCT domain.

This sequence belongs to the NAD-dependent DNA ligase family. LigA subfamily. It depends on Mg(2+) as a cofactor. The cofactor is Mn(2+).

It carries out the reaction NAD(+) + (deoxyribonucleotide)n-3'-hydroxyl + 5'-phospho-(deoxyribonucleotide)m = (deoxyribonucleotide)n+m + AMP + beta-nicotinamide D-nucleotide.. Functionally, DNA ligase that catalyzes the formation of phosphodiester linkages between 5'-phosphoryl and 3'-hydroxyl groups in double-stranded DNA using NAD as a coenzyme and as the energy source for the reaction. It is essential for DNA replication and repair of damaged DNA. This is DNA ligase from Janthinobacterium sp. (strain Marseille) (Minibacterium massiliensis).